The primary structure comprises 481 residues: Phosphoglucosamine mutase (481 aa).

Ser-129 (phosphoserine intermediate) is an active-site residue. Positions 129, 271, 273, and 275 each coordinate Mg(2+). Position 129 is a phosphoserine (Ser-129).

The protein belongs to the phosphohexose mutase family. It depends on Mg(2+) as a cofactor. Post-translationally, activated by phosphorylation.

The enzyme catalyses alpha-D-glucosamine 1-phosphate = D-glucosamine 6-phosphate. In terms of biological role, catalyzes the conversion of glucosamine-6-phosphate to glucosamine-1-phosphate. The chain is Phosphoglucosamine mutase from Picosynechococcus sp. (strain ATCC 27264 / PCC 7002 / PR-6) (Agmenellum quadruplicatum).